Here is a 138-residue protein sequence, read N- to C-terminus: Phospholipase A2 EC1 (138 aa).

Residues 1–16 (MRTLWIVAVWLMSVEG) form the signal peptide. 7 disulfides stabilise this stretch: C42-C131, C44-C60, C59-C111, C65-C138, C66-C104, C73-C97, and C91-C102. The Ca(2+) site is built by Y43, G45, and G47. H63 is an active-site residue. Residue D64 coordinates Ca(2+). Residue D105 is part of the active site.

Belongs to the phospholipase A2 family. Group II subfamily. Ca(2+) serves as cofactor.

The protein resides in the secreted. The catalysed reaction is a 1,2-diacyl-sn-glycero-3-phosphocholine + H2O = a 1-acyl-sn-glycero-3-phosphocholine + a fatty acid + H(+). The polypeptide is Phospholipase A2 EC1 (Echis coloratus (Carpet viper)).